Consider the following 368-residue polypeptide: C2H2 type master regulator of conidiophore development BrlA (368 aa).

A C2H2-type 1; degenerate zinc finger spans residues Cys268–Phe292. The segment at Phe300–His323 adopts a C2H2-type 2 zinc-finger fold. A disordered region spans residues Ala338–Tyr368. Over residues Lys359 to Tyr368 the composition is skewed to basic and acidic residues.

The protein localises to the nucleus. Its function is as follows. BrlA, abaA and wetA are pivotal regulators of conidiophore development and conidium maturation. They act individually and together to regulate their own expression and that of numerous other sporulation-specific genes. BrlA, abaA and wetA act together to positively regulate the expression of the Pks1 gene cluster that mediates the biosynthesis of an anthraquinone derivative pigment that contributes to conidial pigmentation that provides protection from UV radiation, heat and cold stress. This is C2H2 type master regulator of conidiophore development BrlA from Metarhizium robertsii (strain ARSEF 23 / ATCC MYA-3075) (Metarhizium anisopliae (strain ARSEF 23)).